The primary structure comprises 443 residues: Probable glutamate dehydrogenase (443 aa).

Lys-86 is an active-site residue.

The protein belongs to the Glu/Leu/Phe/Val dehydrogenases family.

It catalyses the reaction L-glutamate + NAD(+) + H2O = 2-oxoglutarate + NH4(+) + NADH + H(+). The enzyme catalyses L-glutamate + NADP(+) + H2O = 2-oxoglutarate + NH4(+) + NADPH + H(+). This chain is Probable glutamate dehydrogenase, found in Sinorhizobium fredii (strain NBRC 101917 / NGR234).